The sequence spans 639 residues: MAU2 chromatid cohesion factor homolog (639 aa).

TPR repeat units follow at residues glycine 453–glutamate 486 and serine 493–isoleucine 526.

This sequence belongs to the SCC4/mau-2 family. As to quaternary structure, interacts with Nipped-B to form the cohesin loading complex.

The protein resides in the nucleus. The protein localises to the nucleoplasm. Required for association of the cohesin complex with chromatin during interphase. Plays a role in sister chromatid cohesion and normal progression through prometaphase. This Drosophila ananassae (Fruit fly) protein is MAU2 chromatid cohesion factor homolog.